We begin with the raw amino-acid sequence, 289 residues long: MKKLSFQQIILTLQNYWQDYGCAILQPYDAHVGAGTFHPATVLRCLGSKPWSVAYVQPSRRPGDSRYGMHPNRMQHYYQFQVILKPSPDNIQELYLKSLECLGIDLKAHDIRFVEDDWKSPTLGAAGLGWEVWCDGMEVSQFTYMQQIGGIECKLVAGEITYGLERLALYIQGIDEVKELDWNGQTGEKALKYGEVDFEAERQFSKFNLEFADSEMLLRHFKDSEEQCERLVEANLPLPAYDYCLNASHYFNLLNSRGIISVTERASYVLKVRHLAKICCMKWLEMSGE.

This sequence belongs to the class-II aminoacyl-tRNA synthetase family. As to quaternary structure, tetramer of two alpha and two beta subunits.

It is found in the cytoplasm. The enzyme catalyses tRNA(Gly) + glycine + ATP = glycyl-tRNA(Gly) + AMP + diphosphate. The chain is Glycine--tRNA ligase alpha subunit from Rickettsia bellii (strain OSU 85-389).